Reading from the N-terminus, the 352-residue chain is Anthranilate phosphoribosyltransferase (352 aa).

Residues glycine 96, 99–100 (GS), serine 104, 106–109 (NIST), 124–132 (KHGNRSVSS), and serine 136 contribute to the 5-phospho-alpha-D-ribose 1-diphosphate site. Glycine 96 lines the anthranilate pocket. Residue serine 108 participates in Mg(2+) binding. Position 127 (asparagine 127) interacts with anthranilate. Arginine 182 contacts anthranilate. Positions 241 and 242 each coordinate Mg(2+).

This sequence belongs to the anthranilate phosphoribosyltransferase family. In terms of assembly, homodimer. Requires Mg(2+) as cofactor.

It carries out the reaction N-(5-phospho-beta-D-ribosyl)anthranilate + diphosphate = 5-phospho-alpha-D-ribose 1-diphosphate + anthranilate. It participates in amino-acid biosynthesis; L-tryptophan biosynthesis; L-tryptophan from chorismate: step 2/5. In terms of biological role, catalyzes the transfer of the phosphoribosyl group of 5-phosphorylribose-1-pyrophosphate (PRPP) to anthranilate to yield N-(5'-phosphoribosyl)-anthranilate (PRA). In Syntrophotalea carbinolica (strain DSM 2380 / NBRC 103641 / GraBd1) (Pelobacter carbinolicus), this protein is Anthranilate phosphoribosyltransferase.